Consider the following 1207-residue polypeptide: DNA-directed RNA polymerase subunit beta' (1207 aa).

Cys60, Cys62, Cys75, and Cys78 together coordinate Zn(2+). Residues Asp450, Asp452, and Asp454 each coordinate Mg(2+). Cys818, Cys892, Cys899, and Cys902 together coordinate Zn(2+).

It belongs to the RNA polymerase beta' chain family. As to quaternary structure, the RNAP catalytic core consists of 2 alpha, 1 beta, 1 beta' and 1 omega subunit. When a sigma factor is associated with the core the holoenzyme is formed, which can initiate transcription. Requires Mg(2+) as cofactor. Zn(2+) serves as cofactor.

It catalyses the reaction RNA(n) + a ribonucleoside 5'-triphosphate = RNA(n+1) + diphosphate. DNA-dependent RNA polymerase catalyzes the transcription of DNA into RNA using the four ribonucleoside triphosphates as substrates. The sequence is that of DNA-directed RNA polymerase subunit beta' from Lactococcus lactis subsp. lactis (strain IL1403) (Streptococcus lactis).